Reading from the N-terminus, the 441-residue chain is Transcription factor TOXE (441 aa).

The basic DNA-binding region stretch occupies residues 14–40 (TDINERRKLQNRVAQRKYRTRQKTRMK). The disordered stretch occupies residues 209–243 (FEPNDQRKTENLPREPCGSCPSSSHGYSPTSGNPS). Residues 212-221 (NDQRKTENLP) are compositionally biased toward basic and acidic residues. The span at 228-241 (CPSSSHGYSPTSGN) shows a compositional bias: polar residues. 4 ANK repeats span residues 289–318 (DQFS…PLDI), 322–351 (SGKT…EMLA), 355–384 (EGNS…SCRE), and 413–440 (EGMT…SANV).

Belongs to the bZIP family. In terms of assembly, monomer.

It localises to the nucleus. Transcription factor, part of the diffuse TOX2 gene cluster that mediates the biosynthesis of the HC-toxin, cyclic tetrapeptide of structure cyclo(D-Pro-L-Ala-D-Ala-L-Aeo), where Aeo stands for 2-amino-9,10-epoxi-8-oxodecanoic acid. HC-toxin is a determinant of specificity and virulence in the interaction between the producing fungus and its host, maize. TOXE is a pathway-specific transcription factor which coordinates the expression of genes involved in HC-toxin biosynthesis. Binds to the tox-box, a 10-bp motif with the consensus 5'-ATCTCNCGNA-3', which is found in the promoter of all genes involved in HC-toxin biosynthesis. Required for pathogenicity of the fungus on maize. This is Transcription factor TOXE from Cochliobolus carbonum (Maize leaf spot fungus).